The following is an 804-amino-acid chain: MDLPVDEWKSYLLQKWASLPTSVQVTISTAETLRDIFLHSSSLLQPEDELFLKRLSKGYLVGKDSDAPLFYREEGNKKFQEKDYTGAAVLYSKGVSHSRPNTEDMSLCHANRSAALFHLGQYETCLKDINRAQTHGYPERLQPKIMLRKAECLVALGRLQEASQTISDLERNFTATPALADVLPQTLQRNLHRLKMKMQEKDSLTESFPAALAKTLEDAALREENEQLSNASSSIGLCVDPLKGRCLVATKDILPGELLVQEDAFVSVLNPGELPPPHHGLDSKWDTRVTNGDLYCHRCLKHTLATVPCDGCSYAKYCSQECLQQAWELYHRTECPLGGLLLTLGVFCHIALRLTLLVGFEDVRKIITKLCDKISNKDICLPESNNQVKTLNYGLGESEKNGNIVETPIPGCDINGKYENNYNAVFNLLPHTENHSPEHKFLCALCVSALCRQLEAASLQAIPTERIVNSSQLKAAVTPELCPDVTIWGVAMLRHMLQLQCNAQAMTTIQHTGPKGSIVTDSRQVRLATGIFPVISLLNHSCSPNTSVSFISTVATIRASQRIRKGQEILHCYGPHKSRMGVAERQQKLRSQYFFDCACPACQTEAHRMAAGPRWEAFCCNSCGAPMQGDDVLRCGSRSCAESAVSRDHLVSRLQDLQQQVRVAQKLLRDGELERAVQRLSGCQRDAESFLWAEHAVVGEIADGLARACAALGDWQKSATHLQRSLYVVEVRHGPSSVEMGHELFKLAQIFFNGFAVPEALSTIQKAEEVLSLHCGPWDDEIQELQKMKSCLLDLPPTPVGPAL.

112 to 114 (RSA) is an S-adenosyl-L-methionine binding site. Residues 233-574 (SSIGLCVDPL…KGQEILHCYG (342 aa)) enclose the SET domain. Residues Cys296, Cys299, Cys309, Cys312, Cys318, Cys322, His331, and Cys335 each coordinate Zn(2+). Residues 296-335 (CHRCLKHTLATVPCDGCSYAKYCSQECLQQAWELYHRTEC) form an MYND-type zinc finger. Residues Asn427, 539–540 (NH), Tyr573, and Phe595 each bind S-adenosyl-L-methionine.

Belongs to the class V-like SAM-binding methyltransferase superfamily. Interacts (via MYND-type zinc finger) with HDAC1.

It localises to the nucleus. The protein localises to the cytoplasm. It catalyses the reaction L-lysyl-[protein] + S-adenosyl-L-methionine = N(6)-methyl-L-lysyl-[protein] + S-adenosyl-L-homocysteine + H(+). In terms of biological role, protein-lysine N-methyltransferase. Monomethylates PRMT5, modulating its transcriptional activity. May also act as a histone methyltransferase. Plays a critical role in cardiac development. Acts as a key epigenetic regulator of gene expression during cardiac development via its dual activities as a methyltransferase and negative regulator of HDAC1. The sequence is that of Protein-lysine N-methyltransferase SMYD4 from Homo sapiens (Human).